We begin with the raw amino-acid sequence, 331 residues long: Cytosolic 5'-nucleotidase 3A (331 aa).

Residue Asp-83 is the Nucleophile of the active site. Mg(2+) contacts are provided by Asp-83 and Asp-85. Asp-85 acts as the Proton donor in catalysis. Glu-130 is a CMP binding site. Glu-130 and Ser-151 together coordinate N(7)-methyl-GMP. Substrate contacts are provided by residues 198–200 and Lys-247; that span reads SAG. Residue Asp-272 participates in Mg(2+) binding. Phosphoserine is present on Ser-273.

This sequence belongs to the pyrimidine 5'-nucleotidase family. In terms of assembly, monomer. In terms of tissue distribution, isoform 2 is highly expressed in the brain, heart, spleen, kidney and blood. Isoform 2 is expressed (at protein level) in the spleen, skeletal muscle and gastrointestinal epithelia.

It is found in the cytoplasm. The enzyme catalyses N(7)-methyl-GMP + H2O = N(7)-methylguanosine + phosphate. It catalyses the reaction a ribonucleoside 5'-phosphate + H2O = a ribonucleoside + phosphate. In terms of biological role, nucleotidase which shows specific activity towards cytidine monophosphate (CMP) and 7-methylguanosine monophosphate (m(7)GMP). CMP seems to be the preferred substrate. In Mus musculus (Mouse), this protein is Cytosolic 5'-nucleotidase 3A (Nt5c3a).